We begin with the raw amino-acid sequence, 339 residues long: Heat-inducible transcription repressor HrcA (339 aa).

This sequence belongs to the HrcA family.

Functionally, negative regulator of class I heat shock genes (grpE-dnaK-dnaJ and groELS operons). Prevents heat-shock induction of these operons. In Leifsonia xyli subsp. xyli (strain CTCB07), this protein is Heat-inducible transcription repressor HrcA.